Reading from the N-terminus, the 266-residue chain is Non-structural maintenance of chromosomes element 1 homolog (266 aa).

The interaction with NSMCE3 stretch occupies residues 1–102 (MQGSTRRAGA…SVSKMATDFA (102 aa)). The segment at 191–232 (CNICHSLLIQGQSCETCGIRMHLPCVAKYFQSTAEPRCPHCN) adopts an RING-type; atypical zinc-finger fold. A disordered region spans residues 246–266 (EKEREAGISKSSRKSLRTRQH). Positions 256-266 (SSRKSLRTRQH) are enriched in basic residues.

Belongs to the NSE1 family. Component of the SMC5-SMC6 complex which consists at least of SMC5, SMC6, NSMCE2, NSMCE1, NSMCE4A or EID3 and NSMCE3. NSMCE1, NSMCE4A or EID3 and NSMCE3 probably form a subcomplex that bridges the head domains of the SMC5-SMC6 heterodimer. Interacts with NSMCE3. Post-translationally, ubiquitinated.

It localises to the nucleus. The protein localises to the chromosome. The protein resides in the telomere. The catalysed reaction is S-ubiquitinyl-[E2 ubiquitin-conjugating enzyme]-L-cysteine + [acceptor protein]-L-lysine = [E2 ubiquitin-conjugating enzyme]-L-cysteine + N(6)-ubiquitinyl-[acceptor protein]-L-lysine.. Its function is as follows. RING-type zinc finger-containing E3 ubiquitin ligase that assembles with melanoma antigen protein (MAGE) to catalyze the direct transfer of ubiquitin from E2 ubiquitin-conjugating enzyme to a specific substrate. Within MAGE-RING ubiquitin ligase complex, MAGE stimulates and specifies ubiquitin ligase activity likely through recruitment and/or stabilization of the E2 ubiquitin-conjugating enzyme at the E3:substrate complex. Involved in maintenance of genome integrity, DNA damage response and DNA repair. NSMCE3/MAGEG1 and NSMCE1 ubiquitin ligase are components of SMC5-SMC6 complex and may positively regulate homologous recombination-mediated DNA repair. The chain is Non-structural maintenance of chromosomes element 1 homolog (Nsmce1) from Rattus norvegicus (Rat).